The primary structure comprises 192 residues: Crossover junction endodeoxyribonuclease RuvC (192 aa).

Residues Asp20, Glu80, and Asp153 contribute to the active site. Asp20, Glu80, and Asp153 together coordinate Mg(2+).

Belongs to the RuvC family. Homodimer which binds Holliday junction (HJ) DNA. The HJ becomes 2-fold symmetrical on binding to RuvC with unstacked arms; it has a different conformation from HJ DNA in complex with RuvA. In the full resolvosome a probable DNA-RuvA(4)-RuvB(12)-RuvC(2) complex forms which resolves the HJ. It depends on Mg(2+) as a cofactor.

Its subcellular location is the cytoplasm. The enzyme catalyses Endonucleolytic cleavage at a junction such as a reciprocal single-stranded crossover between two homologous DNA duplexes (Holliday junction).. In terms of biological role, the RuvA-RuvB-RuvC complex processes Holliday junction (HJ) DNA during genetic recombination and DNA repair. Endonuclease that resolves HJ intermediates. Cleaves cruciform DNA by making single-stranded nicks across the HJ at symmetrical positions within the homologous arms, yielding a 5'-phosphate and a 3'-hydroxyl group; requires a central core of homology in the junction. The consensus cleavage sequence is 5'-(A/T)TT(C/G)-3'. Cleavage occurs on the 3'-side of the TT dinucleotide at the point of strand exchange. HJ branch migration catalyzed by RuvA-RuvB allows RuvC to scan DNA until it finds its consensus sequence, where it cleaves and resolves the cruciform DNA. This is Crossover junction endodeoxyribonuclease RuvC from Christiangramia forsetii (strain DSM 17595 / CGMCC 1.15422 / KT0803) (Gramella forsetii).